An 86-amino-acid polypeptide reads, in one-letter code: RNA-binding protein Hfq (86 aa).

A Sm domain is found at 12 to 73; sequence DIFLNQVRKE…ISTITPQKPV (62 aa).

It belongs to the Hfq family. As to quaternary structure, homohexamer.

RNA chaperone that binds small regulatory RNA (sRNAs) and mRNAs to facilitate mRNA translational regulation in response to envelope stress, environmental stress and changes in metabolite concentrations. Also binds with high specificity to tRNAs. The sequence is that of RNA-binding protein Hfq from Thermoanaerobacter pseudethanolicus (strain ATCC 33223 / 39E) (Clostridium thermohydrosulfuricum).